The chain runs to 304 residues: Granaticin polyketide synthase bifunctional cyclase/dehydratase (304 aa).

It functions in the pathway antifungal biosynthesis; monensin biosynthesis. Is needed for correct cyclization of the oligoketide leading to isochromanequinone formation. In Streptomyces virginiae (Streptomyces cinnamonensis), this protein is Granaticin polyketide synthase bifunctional cyclase/dehydratase.